The sequence spans 287 residues: 4-hydroxybenzoate octaprenyltransferase (287 aa).

A run of 9 helical transmembrane segments spans residues 21–41, 44–64, 91–111, 112–132, 139–159, 160–180, 211–231, 235–255, and 263–283; these read VGIFLLLWPTLWAVWIAAKGA, FKIAVIFIAGSVVMRAAGCIV, VTEAMLLFAVLSLIAFTLVLL, LNRLTVELAVIGILLALVYPF, LPQLWLGVAFSWSIPMAFAAT, VGHVPAVAWLLFFAAVLWPIV, LMIGLLQGSVLLTFGLLGWYL, YWFYLGLLVALGLMCYQQFLI, and CFAAFRNNNWVGFFIFLGILL.

This sequence belongs to the UbiA prenyltransferase family. It depends on Mg(2+) as a cofactor.

It localises to the cell inner membrane. It catalyses the reaction all-trans-octaprenyl diphosphate + 4-hydroxybenzoate = 4-hydroxy-3-(all-trans-octaprenyl)benzoate + diphosphate. Its pathway is cofactor biosynthesis; ubiquinone biosynthesis. Catalyzes the prenylation of para-hydroxybenzoate (PHB) with an all-trans polyprenyl group. Mediates the second step in the final reaction sequence of ubiquinone-8 (UQ-8) biosynthesis, which is the condensation of the polyisoprenoid side chain with PHB, generating the first membrane-bound Q intermediate 3-octaprenyl-4-hydroxybenzoate. The chain is 4-hydroxybenzoate octaprenyltransferase from Coxiella burnetii (strain RSA 331 / Henzerling II).